An 85-amino-acid polypeptide reads, in one-letter code: Alpha-toxin Ac2 (85 aa).

The N-terminal stretch at 1 to 19 (MNYLVMISLALLFMTGVES) is a signal peptide. The 63-residue stretch at 21–83 (KDGYIVDDRN…VRTKGPGRCK (63 aa)) folds into the LCN-type CS-alpha/beta domain. 4 cysteine pairs are disulfide-bonded: Cys31-Cys82, Cys35-Cys55, Cys41-Cys65, and Cys45-Cys67. At Lys83 the chain carries Lysine amide.

This sequence belongs to the long (4 C-C) scorpion toxin superfamily. Sodium channel inhibitor family. Alpha subfamily. As to expression, expressed by the venom gland.

It is found in the secreted. Functionally, alpha toxins bind voltage-independently at site-3 of sodium channels (Nav) and inhibit the inactivation of the activated channels, thereby blocking neuronal transmission. The protein is Alpha-toxin Ac2 of Androctonus crassicauda (Arabian fat-tailed scorpion).